A 58-amino-acid polypeptide reads, in one-letter code: MAVPARKTSKTRKRNRRGHIKLTVPGLAPCPQCGELRKSHMVCPSCGYYDGKQVVENN.

The protein belongs to the bacterial ribosomal protein bL32 family.

In Limosilactobacillus fermentum (strain NBRC 3956 / LMG 18251) (Lactobacillus fermentum), this protein is Large ribosomal subunit protein bL32.